The primary structure comprises 227 residues: Lipoprotein-releasing system ATP-binding protein LolD (227 aa).

One can recognise an ABC transporter domain in the interval 6–227; the sequence is LTSQKLYKSY…LHEGSLYARE (222 aa). 42–49 is an ATP binding site; the sequence is GPSGSGKS.

The protein belongs to the ABC transporter superfamily. Lipoprotein translocase (TC 3.A.1.125) family. In terms of assembly, the complex is composed of two ATP-binding proteins (LolD) and two transmembrane proteins (LolC and LolE).

It localises to the cell inner membrane. In terms of biological role, part of the ABC transporter complex LolCDE involved in the translocation of mature outer membrane-directed lipoproteins, from the inner membrane to the periplasmic chaperone, LolA. Responsible for the formation of the LolA-lipoprotein complex in an ATP-dependent manner. In Legionella pneumophila (strain Lens), this protein is Lipoprotein-releasing system ATP-binding protein LolD.